An 84-amino-acid chain; its full sequence is Peptide Ctry2346 (84 aa).

Positions 1–23 (MKTQTLLFTFSLVLLMVATQTEA) are cleaved as a signal peptide. Residue Leu-33 is modified to Leucine amide. A propeptide spanning residues 37-84 (GLLDNLLGKRGLLFGKRALTNQDLFDLAYDPSLSAADMDALEMLLENY) is cleaved from the precursor.

Belongs to the non-disulfide-bridged peptide (NDBP) superfamily. Short antimicrobial peptide (group 4) family. Expressed by the venom gland.

It is found in the secreted. Its subcellular location is the target cell membrane. Antimicrobial peptide. This is Peptide Ctry2346 from Chaerilus tryznai (Scorpion).